A 1217-amino-acid chain; its full sequence is ATP-dependent helicase/nuclease subunit A (1217 aa).

The UvrD-like helicase ATP-binding domain maps to 10–475 (VIWTDAQWQS…IDLSQNFRSR (466 aa)). 31–38 (AAAGSGKT) contributes to the ATP binding site. A UvrD-like helicase C-terminal domain is found at 476 to 786 (KEVLSTTNYI…RMMTIHSSKG (311 aa)).

Belongs to the helicase family. AddA subfamily. As to quaternary structure, heterodimer of AddA and AddB/RexB. Mg(2+) serves as cofactor.

The enzyme catalyses Couples ATP hydrolysis with the unwinding of duplex DNA by translocating in the 3'-5' direction.. The catalysed reaction is ATP + H2O = ADP + phosphate + H(+). The heterodimer acts as both an ATP-dependent DNA helicase and an ATP-dependent, dual-direction single-stranded exonuclease. Recognizes the chi site generating a DNA molecule suitable for the initiation of homologous recombination. The AddA nuclease domain is required for chi fragment generation; this subunit has the helicase and 3' -&gt; 5' nuclease activities. The protein is ATP-dependent helicase/nuclease subunit A of Staphylococcus aureus (strain USA300).